A 305-amino-acid chain; its full sequence is Translation initiation factor eIF2B subunit alpha (305 aa).

N6-acetyllysine is present on K35.

This sequence belongs to the eIF-2B alpha/beta/delta subunits family. In terms of assembly, component of the translation initiation factor 2B (eIF2B) complex which is a heterodecamer of two sets of five different subunits: alpha, beta, gamma, delta and epsilon. Subunits alpha, beta and delta comprise a regulatory subcomplex and subunits epsilon and gamma comprise a catalytic subcomplex. Within the complex, the hexameric regulatory complex resides at the center, with the two heterodimeric catalytic subcomplexes bound on opposite sides.

The protein resides in the cytoplasm. Its subcellular location is the cytosol. Activated by the chemical integrated stress response (ISR) inhibitor ISRIB which stimulates guanine nucleotide exchange factor activity for both phosphorylated and unphosphorylated eIF2. In terms of biological role, acts as a component of the translation initiation factor 2B (eIF2B) complex, which catalyzes the exchange of GDP for GTP on eukaryotic initiation factor 2 (eIF2) gamma subunit. Its guanine nucleotide exchange factor activity is repressed when bound to eIF2 complex phosphorylated on the alpha subunit, thereby limiting the amount of methionyl-initiator methionine tRNA available to the ribosome and consequently global translation is repressed. In Rattus norvegicus (Rat), this protein is Translation initiation factor eIF2B subunit alpha (Eif2b1).